Reading from the N-terminus, the 467-residue chain is ATP synthase subunit beta (467 aa).

152–159 (GGAGVGKT) contributes to the ATP binding site.

This sequence belongs to the ATPase alpha/beta chains family. In terms of assembly, F-type ATPases have 2 components, CF(1) - the catalytic core - and CF(0) - the membrane proton channel. CF(1) has five subunits: alpha(3), beta(3), gamma(1), delta(1), epsilon(1). CF(0) has three main subunits: a(1), b(2) and c(9-12). The alpha and beta chains form an alternating ring which encloses part of the gamma chain. CF(1) is attached to CF(0) by a central stalk formed by the gamma and epsilon chains, while a peripheral stalk is formed by the delta and b chains.

It localises to the cell membrane. It carries out the reaction ATP + H2O + 4 H(+)(in) = ADP + phosphate + 5 H(+)(out). Produces ATP from ADP in the presence of a proton gradient across the membrane. The catalytic sites are hosted primarily by the beta subunits. The sequence is that of ATP synthase subunit beta from Caldicellulosiruptor bescii (strain ATCC BAA-1888 / DSM 6725 / KCTC 15123 / Z-1320) (Anaerocellum thermophilum).